Consider the following 436-residue polypeptide: MQVQLETLGNLERRLDIALPLTDIDAEVQKRLARVARTAKIAGFRPGKAPLKMVERNYGASVREDVLGEQVQLGFSKAVAEQKLRVAGYPRFEPAADNDPAAGEFKFSATFEVYPELTLGSLDGKEVEKAVCEVTDAEIDKTIDVLRKQRTRFNRVERAAADTDRVIIDFAGKIDGEAFAGGSSENFPFVLGQGQMLPEFEAGVIGMKEGESKDVEVSFPADYHGKDVAGKTAVFTITVKNVAEAILPEIDADFAKALGITDGDVSKLRAEIEKNVKREIARRLAARNKEAVMQVLIDANPLELPQSLVMMEISRLMHQAKQDLAQRGMDVKSLPDLPADLFRDQAARRVALGLILAELVKANELKASPEQIKARVEEWADSYEHPEEVIKWYYESPERLEGPENLVLEDNVVEFVLSQAKVNEKAVSFDELMGNA.

Positions 163-248 constitute a PPIase FKBP-type domain; that stretch reads TDRVIIDFAG…VKNVAEAILP (86 aa).

The protein belongs to the FKBP-type PPIase family. Tig subfamily.

It localises to the cytoplasm. The enzyme catalyses [protein]-peptidylproline (omega=180) = [protein]-peptidylproline (omega=0). In terms of biological role, involved in protein export. Acts as a chaperone by maintaining the newly synthesized protein in an open conformation. Functions as a peptidyl-prolyl cis-trans isomerase. In Laribacter hongkongensis (strain HLHK9), this protein is Trigger factor.